Here is a 192-residue protein sequence, read N- to C-terminus: Molybdenum cofactor guanylyltransferase (192 aa).

Residues 10–12 (LAG), Lys23, Asn51, Asp69, and Asp99 each bind GTP. Residue Asp99 participates in Mg(2+) binding.

This sequence belongs to the MobA family. Monomer. It depends on Mg(2+) as a cofactor.

It is found in the cytoplasm. It catalyses the reaction Mo-molybdopterin + GTP + H(+) = Mo-molybdopterin guanine dinucleotide + diphosphate. Transfers a GMP moiety from GTP to Mo-molybdopterin (Mo-MPT) cofactor (Moco or molybdenum cofactor) to form Mo-molybdopterin guanine dinucleotide (Mo-MGD) cofactor. This is Molybdenum cofactor guanylyltransferase from Haemophilus influenzae (strain 86-028NP).